The primary structure comprises 175 residues: Translation initiation factor IF-3 (175 aa).

Belongs to the IF-3 family. In terms of assembly, monomer.

It localises to the cytoplasm. Its function is as follows. IF-3 binds to the 30S ribosomal subunit and shifts the equilibrium between 70S ribosomes and their 50S and 30S subunits in favor of the free subunits, thus enhancing the availability of 30S subunits on which protein synthesis initiation begins. In Chromobacterium violaceum (strain ATCC 12472 / DSM 30191 / JCM 1249 / CCUG 213 / NBRC 12614 / NCIMB 9131 / NCTC 9757 / MK), this protein is Translation initiation factor IF-3.